The chain runs to 73 residues: Conotoxin MaI51 (73 aa).

The N-terminal stretch at Met1–Ala19 is a signal peptide. Residues Leu20 to Glu41 constitute a propeptide that is removed on maturation. A Pyrrolidone carboxylic acid modification is found at Gln46. 3 disulfides stabilise this stretch: Cys47/Cys61, Cys54/Cys65, and Cys60/Cys69. Ile72 carries the isoleucine amide modification.

It belongs to the conotoxin O2 superfamily. Expressed by the venom duct.

It is found in the secreted. The sequence is that of Conotoxin MaI51 from Conus marmoreus (Marble cone).